Reading from the N-terminus, the 88-residue chain is UPF0335 protein NGR_c28390 (88 aa).

It belongs to the UPF0335 family.

The sequence is that of UPF0335 protein NGR_c28390 from Sinorhizobium fredii (strain NBRC 101917 / NGR234).